A 124-amino-acid polypeptide reads, in one-letter code: Small polypeptide ROTUNDIFOLIA LIKE 3 (124 aa).

Residues 1–23 (MEDERWKLSSSKGRSKSGRSCSS) form a disordered region. Residues asparagine 35 and asparagine 38 are each glycosylated (N-linked (GlcNAc...) asparagine). Residues 59 to 75 (AWSAAGAGGGGASSSSS) form a helical membrane-spanning segment. Residues 60–95 (WSAAGAGGGGASSSSSSQHQHQQQQQQSNNSQRLSK) form a disordered region. Low complexity predominate over residues 71–91 (SSSSSSQHQHQQQQQQSNNSQ). Asparagine 88 carries an N-linked (GlcNAc...) asparagine glycan. The required for DVL/RTFL small polypeptide activity stretch occupies residues 92 to 124 (RLSKKCVEAVKEHRARFYIVRRCVSMLVCWRDY).

This sequence belongs to the DVL/RTFL small polypeptides family.

It is found in the cell membrane. Functionally, small polypeptide acting as a regulatory molecule which coordinates cellular responses required for differentiation, growth and development, probably by restricting polar cell proliferation in lateral organs (e.g. leaves and petioles). The sequence is that of Small polypeptide ROTUNDIFOLIA LIKE 3 from Oryza sativa subsp. japonica (Rice).